Here is a 498-residue protein sequence, read N- to C-terminus: Putative F-box/FBD/LRR-repeat protein At4g03220 (498 aa).

An F-box domain is found at 23–71 (VDRISNLPDSLNHQILLLLPLKSAAQASLLSKRWRSLFLSLPDLDFTSI). LRR repeat units lie at residues 148–172 (SQNL…SSAR), 175–200 (FQKL…FFTD), and 235–259 (SLQL…CFYS). In terms of domain architecture, FBD spans 416–466 (YWESQAYELESFLNHLEFVEIHGFVECENEMSLAIFLLRHGKALIKMTLRS).

This is Putative F-box/FBD/LRR-repeat protein At4g03220 from Arabidopsis thaliana (Mouse-ear cress).